A 519-amino-acid polypeptide reads, in one-letter code: Aldehyde dehydrogenase X, mitochondrial (519 aa).

The N-terminal 19 residues, 1 to 19 (MLTARLLLPRLLCLQGRTT), are a transit peptide targeting the mitochondrion. N6-acetyllysine is present on Lys53. Lys54 carries the post-translational modification N6-acetyllysine; alternate. The residue at position 54 (Lys54) is an N6-succinyllysine; alternate. Residue Lys83 is modified to N6-succinyllysine. An NAD(+)-binding site is contributed by 264 to 269 (GSTEVG). Glu287 serves as the catalytic Proton acceptor. Catalysis depends on Cys321, which acts as the Nucleophile. N6-acetyllysine; alternate is present on residues Lys366, Lys385, Lys401, Lys416, and Lys428. N6-succinyllysine; alternate occurs at positions 366, 385, 401, 416, and 428. Lys431 bears the N6-acetyllysine mark.

The protein belongs to the aldehyde dehydrogenase family. In terms of assembly, homotetramer.

The protein localises to the mitochondrion matrix. It catalyses the reaction an aldehyde + NAD(+) + H2O = a carboxylate + NADH + 2 H(+). Its pathway is alcohol metabolism; ethanol degradation; acetate from ethanol: step 2/2. Its function is as follows. ALDHs play a major role in the detoxification of alcohol-derived acetaldehyde. They are involved in the metabolism of corticosteroids, biogenic amines, neurotransmitters, and lipid peroxidation. The chain is Aldehyde dehydrogenase X, mitochondrial (Aldh1b1) from Mus musculus (Mouse).